The following is a 302-amino-acid chain: Taste receptor type 2 member 104 (302 aa).

Residues 1 to 7 lie on the Extracellular side of the membrane; sequence MLSMLES. The chain crosses the membrane as a helical span at residues 8 to 28; that stretch reads ILLSVATSEAMLGILGNIFIV. Residues 29–43 are Cytoplasmic-facing; the sequence is LVNCTNWVRNKKLSK. The helical transmembrane segment at 44 to 64 threads the bilayer; sequence INFILTGLAISRVFTIWIITL. Residues 65–87 lie on the Extracellular side of the membrane; the sequence is DAYTKVFFLTTLMPSNLHECISY. The helical transmembrane segment at 88–108 threads the bilayer; sequence IWVIINHLSVWFATSLSIFYF. Over 109-128 the chain is Cytoplasmic; it reads LKIANFSHYIFLWLKRRADK. The helical transmembrane segment at 129–149 threads the bilayer; that stretch reads VFVFLIGYLIITWLASFPLAV. At 150–182 the chain is on the extracellular side; it reads TVIKNIKVHHNNTSWLIQLEKRELLINYVFANM. N-linked (GlcNAc...) asparagine glycans are attached at residues Asn160 and Asn161. Residues 183 to 203 form a helical membrane-spanning segment; the sequence is GPISLFMVAVFTCFLLTISLW. Topologically, residues 204 to 233 are cytoplasmic; it reads RHRRRMQSTGSKFRDLNTEVHVKAMKVLIS. Residues 234–254 form a helical membrane-spanning segment; the sequence is FIILFILYFMGVLIETLCLFL. Topologically, residues 255-257 are extracellular; sequence TEN. Residues 258 to 278 form a helical membrane-spanning segment; it reads ILLFIFGFTLSSTYPCCHSFI. Over 279 to 302 the chain is Cytoplasmic; the sequence is LILTSRELKQASMRALQRLKCCET.

This sequence belongs to the G-protein coupled receptor T2R family.

Its subcellular location is the membrane. Functionally, putative taste receptor which may play a role in the perception of bitterness. This Rattus norvegicus (Rat) protein is Taste receptor type 2 member 104.